The sequence spans 722 residues: Serine/threonine-protein kinase MARK2 (722 aa).

The interval Met-1 to Glu-46 is disordered. A compositionally biased stretch (polar residues) spans Lys-27–Asp-45. Position 40 is a phosphoserine (Ser-40). Residues Tyr-53–Met-304 form the Protein kinase domain. Phosphothreonine; by autocatalysis is present on Thr-58. ATP contacts are provided by residues Ile-59–Val-67 and Lys-82. Residues Ser-91, Ser-92, and Ser-93 each carry the phosphoserine; by CaMK1 modification. Residue Asp-175 is the Proton acceptor of the active site. Thr-208 carries the post-translational modification Phosphothreonine; by LKB1 and TAOK1. A Phosphoserine; by GSK3-beta modification is found at Ser-212. Phosphoserine; by autocatalysis is present on Ser-274. Thr-275 carries the post-translational modification Phosphothreonine; by autocatalysis. At Thr-294 the chain carries Phosphothreonine; by CaMK1. In terms of domain architecture, UBA spans Tyr-323–Gly-362. A disordered region spans residues Ile-373 to Ser-576. Ser-408 and Ser-409 each carry phosphoserine. Positions Pro-417 to Ala-431 are enriched in polar residues. Residues Glu-432–Arg-442 are compositionally biased toward basic and acidic residues. Ser-453 is subject to Phosphoserine. The residue at position 464 (Thr-464) is a Phosphothreonine. Residues Thr-464 to Ser-483 are compositionally biased toward polar residues. Phosphoserine is present on residues Ser-483 and Ser-490. Positions Gly-492 to Pro-505 are enriched in polar residues. Over residues Ala-511–Ala-524 the composition is skewed to low complexity. 3 positions are modified to phosphoserine: Ser-512, Ser-514, and Ser-535. Phosphothreonine; by PKC/PRKCZ is present on Thr-539. Residues Ser-562 and Ser-656 each carry the phosphoserine modification. In terms of domain architecture, KA1 spans Thr-673–Leu-722.

Belongs to the protein kinase superfamily. CAMK Ser/Thr protein kinase family. SNF1 subfamily. As to quaternary structure, homodimer. Interacts (when phosphorylated at Thr-539) with YWHAZ. Interacts with MTCL1; the interaction is direct and increases MARK2 microtubule-binding ability. Interacts with PAK5; leading to inhibit the protein kinase activity. Interacts with MAPT/TAU. Interacts with YWHAB, YWHAG and YWHAQ. It depends on Mg(2+) as a cofactor. Post-translationally, autophosphorylated. Phosphorylated at Thr-208 by STK11/LKB1 in complex with STE20-related adapter-alpha (STRADA) pseudo kinase and CAB39. Phosphorylation at Thr-208 by TAOK1 activates the kinase activity, leading to phosphorylation and detachment of MAPT/TAU from microtubules. Phosphorylation at Ser-212 by GSK3-beta (GSK3B) inhibits the kinase activity. Phosphorylation by CaMK1 promotes activity and is required to promote neurite outgrowth. Phosphorylation at Thr-539 by PRKCZ/aPKC in polarized epithelial cells inhibits the kinase activity and promotes binding to 14-3-3 protein YWHAZ, leading to relocation from cell membrane to cytoplasm.

It is found in the cell membrane. The protein localises to the lateral cell membrane. The protein resides in the cytoplasm. It localises to the cytoskeleton. Its subcellular location is the cell projection. It is found in the dendrite. It catalyses the reaction L-seryl-[protein] + ATP = O-phospho-L-seryl-[protein] + ADP + H(+). It carries out the reaction L-threonyl-[protein] + ATP = O-phospho-L-threonyl-[protein] + ADP + H(+). The catalysed reaction is L-seryl-[tau protein] + ATP = O-phospho-L-seryl-[tau protein] + ADP + H(+). The enzyme catalyses L-threonyl-[tau protein] + ATP = O-phospho-L-threonyl-[tau protein] + ADP + H(+). With respect to regulation, inhibited by hymenialdisine. Activated by phosphorylation on Thr-208 by STK11/LKB1 and TAOK1. Inhibited by phosphorylation at Ser-212 or Thr-539. Inhibited by PAK5; inhibition is independent of the kinase activity of PAK5. Functionally, serine/threonine-protein kinase. Involved in cell polarity and microtubule dynamics regulation. Phosphorylates CRTC2/TORC2, DCX, HDAC7, KIF13B, MAP2, MAP4 and RAB11FIP2. Phosphorylates the microtubule-associated protein MAPT/TAU. Plays a key role in cell polarity by phosphorylating the microtubule-associated proteins MAP2, MAP4 and MAPT/TAU at KXGS motifs, causing detachment from microtubules, and their disassembly. Regulates epithelial cell polarity by phosphorylating RAB11FIP2. Involved in the regulation of neuronal migration through its dual activities in regulating cellular polarity and microtubule dynamics, possibly by phosphorylating and regulating DCX. Regulates axogenesis by phosphorylating KIF13B, promoting interaction between KIF13B and 14-3-3 and inhibiting microtubule-dependent accumulation of KIF13B. Also required for neurite outgrowth and establishment of neuronal polarity. Regulates localization and activity of some histone deacetylases by mediating phosphorylation of HDAC7, promoting subsequent interaction between HDAC7 and 14-3-3 and export from the nucleus. Also acts as a positive regulator of the Wnt signaling pathway, probably by mediating phosphorylation of dishevelled proteins (DVL1, DVL2 and/or DVL3). Modulates the developmental decision to build a columnar versus a hepatic epithelial cell apparently by promoting a switch from a direct to a transcytotic mode of apical protein delivery. Essential for the asymmetric development of membrane domains of polarized epithelial cells. This is Serine/threonine-protein kinase MARK2 from Rattus norvegicus (Rat).